The chain runs to 576 residues: MSELIDVKTILSGTELGPLADNERLKRESKYLRGTIVEDLQDRITGGFTKDNFQLIRFHGMYQQDDRDIRAERAKQKLEPLHNVMLRARMPGGIITPKQWLAIDKFAEEHTSYGSLRLTTRQTFQFHGVLKPNIKLMHQTLNSIGIDSIATAGDVNRNVLCTTNPVESELHQEAYEWAKKISEHLLPKTRAYAEIWLDGEKLETTDEEPILGSNYLPRKFKTTVVIPPQNDVDVHANDLNFIAIADNGKLVGFNVLVGGGLAMTHGDTATYPRKADDFGFVPLDKTLDVAAAVVTTQRDWGNRSNRKNAKTKYTLDRVGSDVFKGEVEKRAGVQFEKSRPYELTERGDRIGWVEGIDGKHHLALFIENGRLLDYPGKPLKTGVAEIAKVHQGDFRMTANQNLIVAGVPSEQKDHIEQIARAHGLIDDTHSEQRKNSMACVAFPTCPLAMAEAERFLPEFVTEIEGVLKKHNLPEEDNIIFRVTGCPNGCGRAMLAEIGLVGKAPGRYNFHLGGNRSGTRVPKMYKENITDRQILTEIDQLVGRWATERNENEGFGDFTIRAGIVDEVKVSKRDFHA.

C439, C445, C485, and C489 together coordinate [4Fe-4S] cluster. C489 contributes to the siroheme binding site.

Belongs to the nitrite and sulfite reductase 4Fe-4S domain family. As to quaternary structure, alpha(8)-beta(8). The alpha component is a flavoprotein, the beta component is a hemoprotein. The cofactor is siroheme. [4Fe-4S] cluster serves as cofactor.

The catalysed reaction is hydrogen sulfide + 3 NADP(+) + 3 H2O = sulfite + 3 NADPH + 4 H(+). The protein operates within sulfur metabolism; hydrogen sulfide biosynthesis; hydrogen sulfide from sulfite (NADPH route): step 1/1. Its function is as follows. Component of the sulfite reductase complex that catalyzes the 6-electron reduction of sulfite to sulfide. This is one of several activities required for the biosynthesis of L-cysteine from sulfate. This chain is Sulfite reductase [NADPH] hemoprotein beta-component, found in Aliivibrio fischeri (strain ATCC 700601 / ES114) (Vibrio fischeri).